Reading from the N-terminus, the 308-residue chain is Probable manganese-dependent inorganic pyrophosphatase (308 aa).

The Mn(2+) site is built by H9, D13, D15, D75, H97, and D149.

Belongs to the PPase class C family. Mn(2+) serves as cofactor.

It is found in the cytoplasm. It carries out the reaction diphosphate + H2O = 2 phosphate + H(+). The sequence is that of Probable manganese-dependent inorganic pyrophosphatase from Bacillus pumilus (strain SAFR-032).